Reading from the N-terminus, the 271-residue chain is Shikimate dehydrogenase (NADP(+)) (271 aa).

Residues 14–16 (SRS) and threonine 61 contribute to the shikimate site. Catalysis depends on lysine 65, which acts as the Proton acceptor. Shikimate is bound by residues asparagine 86 and aspartate 102. NADP(+) is bound by residues 126-130 (GAGGA), 149-154 (NRTFSR), and methionine 213. Residue tyrosine 215 participates in shikimate binding. Glycine 238 lines the NADP(+) pocket.

It belongs to the shikimate dehydrogenase family. As to quaternary structure, homodimer.

It carries out the reaction shikimate + NADP(+) = 3-dehydroshikimate + NADPH + H(+). It functions in the pathway metabolic intermediate biosynthesis; chorismate biosynthesis; chorismate from D-erythrose 4-phosphate and phosphoenolpyruvate: step 4/7. In terms of biological role, involved in the biosynthesis of the chorismate, which leads to the biosynthesis of aromatic amino acids. Catalyzes the reversible NADPH linked reduction of 3-dehydroshikimate (DHSA) to yield shikimate (SA). In Histophilus somni (strain 129Pt) (Haemophilus somnus), this protein is Shikimate dehydrogenase (NADP(+)).